The chain runs to 60 residues: Mastoparan-VT6 (60 aa).

Positions 1 to 27 (MKNTILILFTAFIALLGFFGMSAEALA) are cleaved as a signal peptide. AXPX repeat units lie at residues 27 to 30 (ADPK), 31 to 34 (ADPL), 35 to 38 (AGPN), and 41 to 44 (ADPE). Residues 28-45 (DPKADPLAGPNPDADPEA) constitute a propeptide that is removed on maturation. Leu-59 carries the leucine amide modification.

Belongs to the MCD family. Mastoparan subfamily. In terms of tissue distribution, expressed by the venom gland.

It is found in the secreted. In terms of biological role, the synthetic peptide shows antimicrobial activities against Gram-negative bacteria (but not against all strains tested), Gram-positive bacteria (all strains tested) and the fungi C.albicans and C.parapsilosis. Exhibits little hemolytic activity against washed human erythrocytes. The polypeptide is Mastoparan-VT6 (Vespa tropica (Greater banded hornet)).